The sequence spans 240 residues: MSPAQIIRTSHSFPPSFTGTSSSAENSHAQSPQQVLTRAFVASGELNAAFGRTSTASAQDFTSLLGTLQRELEKKTPAFPDLAELANQLADAAMGDQGGHWLGRDEQQTLKGMIDRCKSQLAHTPASDASYDLLAQVCENLKKARLHQSISQMTGEAHAKVRGVPDLLALIQLDPDILAEKPVGMPSYVKFSSFICMAKARTAELSENLRNASNEVALLLHPHADTILEQGSLRLQIVGF.

The interval 1-32 (MSPAQIIRTSHSFPPSFTGTSSSAENSHAQSP) is disordered. The segment covering 9–23 (TSHSFPPSFTGTSSS) has biased composition (low complexity).

It belongs to the HopW family.

The sequence is that of Putative truncated effector protein hopW1-2 (hopW1-2) from Pseudomonas syringae pv. maculicola.